Reading from the N-terminus, the 1274-residue chain is Vacuolar protein sorting-associated protein 8 (1274 aa).

Residue Met-1 is modified to N-acetylmethionine. WD repeat units lie at residues 75–119 (THVY…QTIL), 131–170 (SIRS…RVKP), and 193–233 (HVNK…FWQL). CHCR repeat units lie at residues 507–665 (LQQS…YPQN) and 915–1092 (FDLL…KYPS). The segment at 1198–1266 (CEICGKKIWG…PDEYSCLICQ (69 aa)) adopts an RING-type; atypical zinc-finger fold.

It belongs to the VPS8 family.

The protein resides in the golgi apparatus. The protein localises to the golgi stack. In terms of biological role, required for localization and recycling of the CPY sorting receptor (VPS10) to the late-Golgi compartment. Involved in the retention of proteins to the late-Golgi. Plays an integral role in the complex vacuolar protein sorting process. The chain is Vacuolar protein sorting-associated protein 8 (VPS8) from Saccharomyces cerevisiae (strain ATCC 204508 / S288c) (Baker's yeast).